A 334-amino-acid polypeptide reads, in one-letter code: Putative lysine N-acyltransferase C17G9.06c (334 aa).

A substrate-binding site is contributed by His248. The active-site Proton acceptor is the Glu286.

Belongs to the lysine N-acyltransferase mbtK family.

Its subcellular location is the cytoplasm. It localises to the nucleus. This Schizosaccharomyces pombe (strain 972 / ATCC 24843) (Fission yeast) protein is Putative lysine N-acyltransferase C17G9.06c.